Reading from the N-terminus, the 142-residue chain is Semaphorin-like protein VACWR164 (142 aa).

A Sema domain is found at 1–142 (MNTIKQSFST…MPQMKKILKM (142 aa)).

The protein belongs to the semaphorin family.

The protein is Semaphorin-like protein VACWR164 of Bos taurus (Bovine).